Consider the following 457-residue polypeptide: ATP synthase subunit beta (457 aa).

147–154 (GGAGVGKT) serves as a coordination point for ATP.

Belongs to the ATPase alpha/beta chains family. As to quaternary structure, F-type ATPases have 2 components, CF(1) - the catalytic core - and CF(0) - the membrane proton channel. CF(1) has five subunits: alpha(3), beta(3), gamma(1), delta(1), epsilon(1). CF(0) has three main subunits: a(1), b(2) and c(9-12). The alpha and beta chains form an alternating ring which encloses part of the gamma chain. CF(1) is attached to CF(0) by a central stalk formed by the gamma and epsilon chains, while a peripheral stalk is formed by the delta and b chains.

Its subcellular location is the cell inner membrane. The enzyme catalyses ATP + H2O + 4 H(+)(in) = ADP + phosphate + 5 H(+)(out). Its function is as follows. Produces ATP from ADP in the presence of a proton gradient across the membrane. The catalytic sites are hosted primarily by the beta subunits. The sequence is that of ATP synthase subunit beta from Glaesserella parasuis serovar 5 (strain SH0165) (Haemophilus parasuis).